Consider the following 424-residue polypeptide: MALPTPSDSTLPAEARGRGRRRRLVWTPSQSEALRACFERNPYPGIATRERLAQAIGIPEPRVQIWFQNERSRQLRQHRRESRPWPGRRGPPEGRRKRTAVTGSQTALLLRAFEKDRFPGIAAREELARETGLPESRIQIWFQNRRARHPGQGGRAPAQAGGLCSAAPGGGHPAPSWVAFAHTGAWGTGLPAPHVPCAPGALPQGAFVSQAARAAPALQPSQAAPAEGISQPAPARGDFAYAAPAPPDGALSHPQAPRWPPHPGKSREDRDPQRDGLPGPCAVAQPGPAQAGPQGQGVLAPPTSQGSPWWGWGRGPQVAGAAWEPQAGAAPPPQPAPPDASASARQGQMQGIPAPSQALQEPAPWSALPCGLLLDELLASPEFLQQAQPLLETEAPGELEASEEAASLEAPLSEEEYRALLEEL.

Residues 1–10 (MALPTPSDST) show a composition bias toward polar residues. Disordered regions lie at residues 1–24 (MALP…RRRL), 72–102 (SRQL…TAVT), 218–362 (LQPS…LQEP), and 388–414 (QPLL…PLSE). DNA-binding regions (homeobox) lie at residues 19–78 (GRRR…LRQH) and 94–153 (GRRK…PGQG). The span at 265 to 274 (KSREDRDPQR) shows a compositional bias: basic and acidic residues. Composition is skewed to low complexity over residues 278–302 (PGPC…LAPP) and 319–329 (AGAAWEPQAGA). Positions 327-424 (AGAAPPPQPA…EEYRALLEEL (98 aa)) are required for interaction with EP300 and CREBBP, and for transcriptional activation of target genes. Residues 405–424 (AASLEAPLSEEEYRALLEEL) form an important for transcriptional activation of target genes region.

Belongs to the paired homeobox family. Binds DNA as a monomer. Interacts (via C-terminus) with EP300 and CREBBP. As to expression, isoform 1: Does not seem to be expressed in normal muscle, but is detected in muscle of individuals with FSHD, and also in testis (at protein level). Isoform 1: Does not seem to be expressed in normal muscle, but in muscle of individuals with FSHD, where it may be toxic to cells. Isoform 2: Detected in skeletal muscle, fibroblasts and testis from healthy individuals.

It is found in the nucleus. It localises to the cytoplasm. Transcription factor that is selectively and transiently expressed in cleavage-stage embryos. Binds to double-stranded DNA elements with the consensus sequence 5'-TAATCTAATCA-3'. Binds to chromatin containing histone H3 acetylated at 'Lys-27' (H3K27ac) and promotes deacetylation of H3K27ac. In parallel, binds to chromatin that lacks histone H3 acetylation at 'Lys-27' (H3K27ac) and recruits EP300 and CREBBP to promote acetylation of histone H3 at 'Lys-27' at new sites. Involved in transcriptional regulation of numerous genes, primarily as transcriptional activator, but also mediates repression of a set of target genes. Promotes expression of ZSCAN4 and KDM4E, two proteins with essential roles during early embryogenesis. Promotes nuclear translocation of CTNNB1/beta-catenin and its subsequent activation of target genes. Heterologous expression in cultured embryonic stem cells mediates transcription of HERVL retrotransposons and transcripts derived from ACRO1 and HSATII satellite repeats. May activate expression of PITX1. May regulate microRNA (miRNA) expression. Inappropriate expression can inhibit myogenesis and promote apoptosis. Its function is as follows. Probably inactive as a transcriptional activator, due to the absence of the C-terminal region that is important for transcriptional activation. Can inhibit transcriptional activation mediated by isoform 1. Heterologous expression of isoform 2 has no deleterious effect on cell survival. The protein is Double homeobox protein 4 of Homo sapiens (Human).